The sequence spans 385 residues: NifS/IcsS protein homolog (385 aa).

Residues 69–70, N149, Q178, and 199–201 contribute to the pyridoxal 5'-phosphate site; these read GT and SSH. N6-(pyridoxal phosphate)lysine is present on K202. T237 is a binding site for pyridoxal 5'-phosphate. Catalysis depends on C325, which acts as the Cysteine persulfide intermediate. C325 lines the [2Fe-2S] cluster pocket.

Belongs to the class-V pyridoxal-phosphate-dependent aminotransferase family. NifS/IscS subfamily. Pyridoxal 5'-phosphate is required as a cofactor.

The protein is NifS/IcsS protein homolog of Lactobacillus delbrueckii subsp. bulgaricus (strain ATCC 11842 / DSM 20081 / BCRC 10696 / JCM 1002 / NBRC 13953 / NCIMB 11778 / NCTC 12712 / WDCM 00102 / Lb 14).